We begin with the raw amino-acid sequence, 86 residues long: Large ribosomal subunit protein bL31 (86 aa).

Positions 65-86 are disordered; the sequence is YGMASSDSSEQKDKSSEEKKES. Positions 73–86 are enriched in basic and acidic residues; the sequence is SEQKDKSSEEKKES.

Belongs to the bacterial ribosomal protein bL31 family. Type A subfamily. As to quaternary structure, part of the 50S ribosomal subunit.

Functionally, binds the 23S rRNA. In Prochlorococcus marinus (strain NATL2A), this protein is Large ribosomal subunit protein bL31.